The chain runs to 141 residues: Large ribosomal subunit protein uL11 (141 aa).

This sequence belongs to the universal ribosomal protein uL11 family. In terms of assembly, part of the ribosomal stalk of the 50S ribosomal subunit. Interacts with L10 and the large rRNA to form the base of the stalk. L10 forms an elongated spine to which L12 dimers bind in a sequential fashion forming a multimeric L10(L12)X complex. In terms of processing, one or more lysine residues are methylated.

Its function is as follows. Forms part of the ribosomal stalk which helps the ribosome interact with GTP-bound translation factors. This is Large ribosomal subunit protein uL11 from Nitratiruptor sp. (strain SB155-2).